A 254-amino-acid polypeptide reads, in one-letter code: E3 ubiquitin-protein ligase NEURL3 (254 aa).

The 158-residue stretch at 17–174 (ALSFHGDATG…TTKAIELLDP (158 aa)) folds into the NHR domain. An RING-type zinc finger spans residues 197 to 236 (CVICFHNTANTRLMPCGHSQFCGSCAWHIFKDTARCPMCR).

Its subcellular location is the cytoplasm. It carries out the reaction S-ubiquitinyl-[E2 ubiquitin-conjugating enzyme]-L-cysteine + [acceptor protein]-L-lysine = [E2 ubiquitin-conjugating enzyme]-L-cysteine + N(6)-ubiquitinyl-[acceptor protein]-L-lysine.. It functions in the pathway protein modification; protein ubiquitination. E3 ubiquitin-protein ligase that plays a role in various biological processes such as lung development or innate immunity. Seems to utilize UBE2E1. Promotes innate antiviral response by catalyzing 'Lys-63'-linked ubiquitination of IRF7. Also inhibits hepatitis C virus assembly by directly binding to viral E1 envelope glycoprotein to disrupt its interaction with E2. Plays an essential role in TLR4-mediated activation of MAPK pathways by promoting 'Lys-48'-linked polyubiquitination of the phosphatase DUSP1/MKP1. The chain is E3 ubiquitin-protein ligase NEURL3 (Neurl3) from Rattus norvegicus (Rat).